A 283-amino-acid polypeptide reads, in one-letter code: Acetyl-coenzyme A carboxylase carboxyl transferase subunit beta (283 aa).

Positions 27–283 (VWVKCERCGE…LLDLHLRGEK (257 aa)) constitute a CoA carboxyltransferase N-terminal domain. Residues cysteine 31, cysteine 34, cysteine 50, and cysteine 53 each coordinate Zn(2+). The C4-type zinc-finger motif lies at 31–53 (CERCGEILFKKELDKNYKVCLKC).

This sequence belongs to the AccD/PCCB family. Acetyl-CoA carboxylase is a heterohexamer composed of biotin carboxyl carrier protein (AccB), biotin carboxylase (AccC) and two subunits each of ACCase subunit alpha (AccA) and ACCase subunit beta (AccD). Zn(2+) is required as a cofactor.

The protein resides in the cytoplasm. It catalyses the reaction N(6)-carboxybiotinyl-L-lysyl-[protein] + acetyl-CoA = N(6)-biotinyl-L-lysyl-[protein] + malonyl-CoA. The protein operates within lipid metabolism; malonyl-CoA biosynthesis; malonyl-CoA from acetyl-CoA: step 1/1. Its function is as follows. Component of the acetyl coenzyme A carboxylase (ACC) complex. Biotin carboxylase (BC) catalyzes the carboxylation of biotin on its carrier protein (BCCP) and then the CO(2) group is transferred by the transcarboxylase to acetyl-CoA to form malonyl-CoA. The sequence is that of Acetyl-coenzyme A carboxylase carboxyl transferase subunit beta from Pelotomaculum thermopropionicum (strain DSM 13744 / JCM 10971 / SI).